A 461-amino-acid polypeptide reads, in one-letter code: Nucleobindin-1 (461 aa).

Positions 1-26 (MPPSGPRGTLLLLPLLLLLLLRAVLA) are cleaved as a signal peptide. Residues 42-51 (TESPDTGLYY) are O-glycosylated at one site. At S86 the chain carries Phosphoserine; by FAM20C. The residue at position 148 (T148) is a Phosphothreonine; by FAM20C. A coiled-coil region spans residues 150 to 218 (EARDLELLIQ…QQRRHREHPK (69 aa)). The DNA-binding element occupies 172–218 (HHEEFKRYEMLKEHERRRYLESLGEEQRKEAERKLEEQQRRHREHPK). A compositionally biased stretch (basic and acidic residues) spans 193 to 210 (SLGEEQRKEAERKLEEQQ). Positions 193–221 (SLGEEQRKEAERKLEEQQRRHREHPKVNV) are disordered. Residues 228 to 321 (LKEVWEELDG…VTLEEFLAST (94 aa)) are binds to GNAI2 and GNAI3. EF-hand domains follow at residues 240 to 275 (PNRF…ELEK) and 292 to 327 (ERLR…KEFG). 8 residues coordinate Ca(2+): D253, N255, D257, E264, D305, N307, D309, and E316. The short motif at 303–333 (NVDTNQDRLVTLEEFLASTQRKEFGDTGEGW) is the GBA element. Positions 341 to 407 (AYTEEELRRF…QRKQQQQQQQ (67 aa)) form a coiled coil. Positions 368-461 (LSQETEALGR…LPEVEVPQHL (94 aa)) are disordered. Position 369 is a phosphoserine; by FAM20C (S369). Positions 437-461 (DQKEVDTSEKKLLERLPEVEVPQHL) are enriched in basic and acidic residues.

Belongs to the nucleobindin family. As to quaternary structure, interacts (via GBA motif) with guanine nucleotide-binding protein G(i) alpha subunits GNAI1, GNAI2 and GNAI3 with higher affinity for GNAI1 and GNAI3 than for GNAI2. Preferentially interacts with inactive rather than active GNAI3. Interaction with GNAI3 is inhibited when NUCB1 binds calcium, probably due to a conformational change which renders the GBA motif inaccessible. Post-translationally, O-glycosylated. In terms of tissue distribution, expressed both in fetal and adult heart, lung, liver, kidney and brain, and in adult skeletal muscle, placenta and pancreas.

It localises to the golgi apparatus. It is found in the cis-Golgi network membrane. Its subcellular location is the cytoplasm. The protein localises to the secreted. Functionally, major calcium-binding protein of the Golgi which may have a role in calcium homeostasis. Acts as a non-receptor guanine nucleotide exchange factor which binds to and activates alpha subunits of guanine nucleotide-binding proteins (G proteins). In Homo sapiens (Human), this protein is Nucleobindin-1 (NUCB1).